A 460-amino-acid chain; its full sequence is Bifunctional protein GlmU (460 aa).

A pyrophosphorylase region spans residues 1-232; the sequence is MALNVVILAA…AIEVEGANNR (232 aa). UDP-N-acetyl-alpha-D-glucosamine is bound by residues 8 to 11, Lys-22, Gln-73, 78 to 79, 100 to 102, Gly-137, Glu-157, Asn-172, and Asn-230; these read LAAG, GT, and YGD. Asp-102 is a Mg(2+) binding site. Asn-230 is a binding site for Mg(2+). The tract at residues 233-253 is linker; it reads VQLAQLERAYQAREAEKLMLA. Residues 254–460 are N-acetyltransferase; it reads GANLRDPSRI…GWQRPVKIKK (207 aa). Residues Arg-336 and Lys-354 each coordinate UDP-N-acetyl-alpha-D-glucosamine. The active-site Proton acceptor is His-366. UDP-N-acetyl-alpha-D-glucosamine-binding residues include Tyr-369 and Asn-380. Acetyl-CoA-binding positions include Ala-383, 389–390, Ser-408, Ala-426, and Arg-443; that span reads NY.

It in the N-terminal section; belongs to the N-acetylglucosamine-1-phosphate uridyltransferase family. The protein in the C-terminal section; belongs to the transferase hexapeptide repeat family. As to quaternary structure, homotrimer. It depends on Mg(2+) as a cofactor.

The protein localises to the cytoplasm. The enzyme catalyses alpha-D-glucosamine 1-phosphate + acetyl-CoA = N-acetyl-alpha-D-glucosamine 1-phosphate + CoA + H(+). The catalysed reaction is N-acetyl-alpha-D-glucosamine 1-phosphate + UTP + H(+) = UDP-N-acetyl-alpha-D-glucosamine + diphosphate. It participates in nucleotide-sugar biosynthesis; UDP-N-acetyl-alpha-D-glucosamine biosynthesis; N-acetyl-alpha-D-glucosamine 1-phosphate from alpha-D-glucosamine 6-phosphate (route II): step 2/2. The protein operates within nucleotide-sugar biosynthesis; UDP-N-acetyl-alpha-D-glucosamine biosynthesis; UDP-N-acetyl-alpha-D-glucosamine from N-acetyl-alpha-D-glucosamine 1-phosphate: step 1/1. It functions in the pathway bacterial outer membrane biogenesis; LPS lipid A biosynthesis. Functionally, catalyzes the last two sequential reactions in the de novo biosynthetic pathway for UDP-N-acetylglucosamine (UDP-GlcNAc). The C-terminal domain catalyzes the transfer of acetyl group from acetyl coenzyme A to glucosamine-1-phosphate (GlcN-1-P) to produce N-acetylglucosamine-1-phosphate (GlcNAc-1-P), which is converted into UDP-GlcNAc by the transfer of uridine 5-monophosphate (from uridine 5-triphosphate), a reaction catalyzed by the N-terminal domain. The protein is Bifunctional protein GlmU of Shewanella baltica (strain OS223).